Reading from the N-terminus, the 721-residue chain is Polyribonucleotide nucleotidyltransferase (721 aa).

Mg(2+)-binding residues include D495 and D501. One can recognise a KH domain in the interval 562–621 (PRLLSFRIDPELIGTVIGPGGRTIKGITERTNTKIDIEDSGIVTIASHDGAAADEAQKII). Residues 631–699 (GEVFSGAITR…NRGRINLTLR (69 aa)) enclose the S1 motif domain. The tract at residues 700 to 721 (GVPQNGEEAEPAPAPTPVAPLN) is disordered. Positions 711-721 (APAPTPVAPLN) are enriched in pro residues.

The protein belongs to the polyribonucleotide nucleotidyltransferase family. Requires Mg(2+) as cofactor.

Its subcellular location is the cytoplasm. It carries out the reaction RNA(n+1) + phosphate = RNA(n) + a ribonucleoside 5'-diphosphate. Involved in mRNA degradation. Catalyzes the phosphorolysis of single-stranded polyribonucleotides processively in the 3'- to 5'-direction. In Synechococcus sp. (strain WH7803), this protein is Polyribonucleotide nucleotidyltransferase.